Here is a 432-residue protein sequence, read N- to C-terminus: Adenylosuccinate synthetase (432 aa).

Residues 13–19 (GDEGKGK) and 41–43 (GHT) contribute to the GTP site. Aspartate 14 (proton acceptor) is an active-site residue. Positions 14 and 41 each coordinate Mg(2+). IMP contacts are provided by residues 14-17 (DEGK), 39-42 (NAGH), threonine 130, arginine 144, glutamine 225, threonine 240, and arginine 304. The Proton donor role is filled by histidine 42. Residue 300 to 306 (STTGRRR) coordinates substrate. GTP contacts are provided by residues arginine 306, 332–334 (KID), and 415–417 (STG).

The protein belongs to the adenylosuccinate synthetase family. In terms of assembly, homodimer. Mg(2+) serves as cofactor.

Its subcellular location is the cytoplasm. The enzyme catalyses IMP + L-aspartate + GTP = N(6)-(1,2-dicarboxyethyl)-AMP + GDP + phosphate + 2 H(+). Its pathway is purine metabolism; AMP biosynthesis via de novo pathway; AMP from IMP: step 1/2. Functionally, plays an important role in the de novo pathway of purine nucleotide biosynthesis. Catalyzes the first committed step in the biosynthesis of AMP from IMP. The polypeptide is Adenylosuccinate synthetase (Blochmanniella pennsylvanica (strain BPEN)).